A 230-amino-acid chain; its full sequence is Orotate phosphoribosyltransferase (230 aa).

Residues Arg107, Lys108, Lys111, His113, and 133–141 contribute to the 5-phospho-alpha-D-ribose 1-diphosphate site; that span reads EDLTTAGGS. Residue Thr137 coordinates orotate.

The protein belongs to the purine/pyrimidine phosphoribosyltransferase family. PyrE subfamily. In terms of assembly, homodimer. It depends on Mg(2+) as a cofactor.

It catalyses the reaction orotidine 5'-phosphate + diphosphate = orotate + 5-phospho-alpha-D-ribose 1-diphosphate. It functions in the pathway pyrimidine metabolism; UMP biosynthesis via de novo pathway; UMP from orotate: step 1/2. Catalyzes the transfer of a ribosyl phosphate group from 5-phosphoribose 1-diphosphate to orotate, leading to the formation of orotidine monophosphate (OMP). This Allorhizobium ampelinum (strain ATCC BAA-846 / DSM 112012 / S4) (Agrobacterium vitis (strain S4)) protein is Orotate phosphoribosyltransferase.